Here is a 288-residue protein sequence, read N- to C-terminus: 4-hydroxybenzoate octaprenyltransferase (288 aa).

Helical transmembrane passes span 38–58 (IAAQSIPSLHILIVFTAGVFL), 98–120 (ILFASLVGLSFLLVLTLNSMTIW), 141–161 (LLQVVLGAAFGWSIPMGFSAV), 163–183 (ESLPLVCWVLFLVNILWSVIY), 213–233 (LIIGILQIVMIVLLVLVGSLA), 238–258 (VYYIALSLSALLFIYQQKLMV), and 268–288 (AFLNNNYVGLILFIGIFLSYL).

It belongs to the UbiA prenyltransferase family. The cofactor is Mg(2+).

It is found in the cell inner membrane. It carries out the reaction all-trans-octaprenyl diphosphate + 4-hydroxybenzoate = 4-hydroxy-3-(all-trans-octaprenyl)benzoate + diphosphate. The protein operates within cofactor biosynthesis; ubiquinone biosynthesis. In terms of biological role, catalyzes the prenylation of para-hydroxybenzoate (PHB) with an all-trans polyprenyl group. Mediates the second step in the final reaction sequence of ubiquinone-8 (UQ-8) biosynthesis, which is the condensation of the polyisoprenoid side chain with PHB, generating the first membrane-bound Q intermediate 3-octaprenyl-4-hydroxybenzoate. This chain is 4-hydroxybenzoate octaprenyltransferase, found in Providencia stuartii.